The sequence spans 407 residues: tRNA(Ile2) 2-agmatinylcytidine synthetase TiaS (407 aa).

The protein belongs to the TiaS family.

It is found in the cytoplasm. The catalysed reaction is cytidine(34) in tRNA(Ile2) + agmatine + ATP + H2O = 2-agmatinylcytidine(34) in tRNA(Ile2) + AMP + 2 phosphate + 2 H(+). In terms of biological role, ATP-dependent agmatine transferase that catalyzes the formation of 2-agmatinylcytidine (agm2C) at the wobble position (C34) of tRNA(Ile2), converting the codon specificity from AUG to AUA. The polypeptide is tRNA(Ile2) 2-agmatinylcytidine synthetase TiaS (Caldivirga maquilingensis (strain ATCC 700844 / DSM 13496 / JCM 10307 / IC-167)).